Consider the following 186-residue polypeptide: Ribosome-recycling factor (186 aa).

The protein belongs to the RRF family.

It is found in the cytoplasm. Responsible for the release of ribosomes from messenger RNA at the termination of protein biosynthesis. May increase the efficiency of translation by recycling ribosomes from one round of translation to another. The polypeptide is Ribosome-recycling factor (Cupriavidus necator (strain ATCC 17699 / DSM 428 / KCTC 22496 / NCIMB 10442 / H16 / Stanier 337) (Ralstonia eutropha)).